The chain runs to 204 residues: Phosphoribosyl-dephospho-CoA transferase (204 aa).

Active-site residues include Asp129 and Asp131.

Belongs to the MdcG family.

It catalyses the reaction apo-[malonate decarboxylase ACP] + 2'-(5''-triphospho-alpha-D-ribosyl)-3'-dephospho-CoA = holo-[malonate decarboxylase ACP] + diphosphate. Functionally, transfers 2'-(5-triphosphoribosyl)-3'-dephosphocoenzyme-A to the apo-[acyl-carrier-protein] of the malonate decarboxylase to yield holo-[acyl-carrier-protein]. The protein is Phosphoribosyl-dephospho-CoA transferase of Pseudomonas putida (Arthrobacter siderocapsulatus).